Consider the following 166-residue polypeptide: UPF0304 protein VIBHAR_01542 (166 aa).

It belongs to the UPF0304 family.

In Vibrio campbellii (strain ATCC BAA-1116), this protein is UPF0304 protein VIBHAR_01542.